The chain runs to 942 residues: MORC family CW-type zinc finger protein 3 (942 aa).

Residues K191, K205, K280, and K293 each participate in a glycyl lysine isopeptide (Lys-Gly) (interchain with G-Cter in SUMO2) cross-link. Positions 326–353 (AYEKVGCQLKANNMGVGVVGIIECNFLK) are nuclear matrix binding. A CW-type zinc finger spans residues 404–454 (KRPDQTWVQCDACLKWRKLPDGIDQLPEKWYCSNNPDPQFRNCEVPEEPED). Zn(2+) contacts are provided by C413, C416, C435, and C446. Residues 503-594 (SFSPVKESVP…ENSTPKPAVD (92 aa)) are RNA binding. 2 positions are modified to phosphoserine: S517 and S543. Residue K558 forms a Glycyl lysine isopeptide (Lys-Gly) (interchain with G-Cter in SUMO2) linkage. S563 carries the phosphoserine modification. K604 participates in a covalent cross-link: Glycyl lysine isopeptide (Lys-Gly) (interchain with G-Cter in SUMO1); alternate. K604 is covalently cross-linked (Glycyl lysine isopeptide (Lys-Gly) (interchain with G-Cter in SUMO2); alternate). The disordered stretch occupies residues 623–654 (PKPCVQASSTSTSTSRSDPGITVSTQTDAPGL). Positions 630–639 (SSTSTSTSRS) are enriched in low complexity. Residues K657, K658, and K743 each participate in a glycyl lysine isopeptide (Lys-Gly) (interchain with G-Cter in SUMO1); alternate cross-link. Residues K657, K658, and K743 each participate in a glycyl lysine isopeptide (Lys-Gly) (interchain with G-Cter in SUMO2); alternate cross-link. Residues 696-874 (SHQLQELRSE…KSTGQQAAAD (179 aa)) are a coiled coil. S768 carries the phosphoserine modification. K797 participates in a covalent cross-link: Glycyl lysine isopeptide (Lys-Gly) (interchain with G-Cter in SUMO1); alternate. Residue K797 forms a Glycyl lysine isopeptide (Lys-Gly) (interchain with G-Cter in SUMO2); alternate linkage.

In terms of assembly, homodimer. The sumoylated form interacts with PML (via SUMO-interacting motif). Interacts with TP53. Post-translationally, sumoylation is involved in interaction with PML and localization to PML nuclear bodies.

The protein localises to the nucleus. The protein resides in the nucleoplasm. It localises to the nucleus matrix. Its subcellular location is the PML body. It is found in the chromosome. Dimerization of the ATPase domain is strictly required for the catalytic activity and binding to double-stranded DNA. Disrupting the interface between ATPase and the CW domains releases autoinhibition since the CW domain sterically impedes binding of the ATPase domain to DNA. Nuclear matrix protein which forms MORC3-NBs (nuclear bodies) via an ATP-dependent mechanism and plays a role in innate immunity by restricting different viruses through modulation of the IFN response. Mechanistically, possesses a primary antiviral function through a MORC3-regulated element that activates IFNB1, and this function is guarded by a secondary IFN-repressing function. Sumoylated MORC3-NBs associates with PML-NBs and recruits TP53 and SP100, thus regulating TP53 activity. Binds RNA in vitro. Histone methylation reader which binds to non-methylated (H3K4me0), monomethylated (H3K4me1), dimethylated (H3K4me2) and trimethylated (H3K4me3) 'Lys-4' on histone H3. The order of binding preference is H3K4me3 &gt; H3K4me2 &gt; H3K4me1 &gt; H3K4me0. In Mus musculus (Mouse), this protein is MORC family CW-type zinc finger protein 3.